The chain runs to 129 residues: Histone H2B.1 (129 aa).

Basic and acidic residues predominate over residues 1 to 17; it reads MSAEKKPASKAPAEKKP. The disordered stretch occupies residues 1 to 35; that stretch reads MSAEKKPASKAPAEKKPAAKKTAPSADGKKRTKAR. Residues Lys-5 and Lys-6 each carry the N6-acetyllysine; alternate modification. Glycyl lysine isopeptide (Lys-Gly) (interchain with G-Cter in SUMO); alternate cross-links involve residues Lys-5 and Lys-6. Residue Ser-9 is modified to Phosphoserine. Lys-10 carries the N6-acetyllysine modification. Lys-15 is modified (N6-acetyllysine; alternate). A Glycyl lysine isopeptide (Lys-Gly) (interchain with G-Cter in SUMO); alternate cross-link involves residue Lys-15. Residue Lys-16 forms a Glycyl lysine isopeptide (Lys-Gly) (interchain with G-Cter in SUMO) linkage. Lys-122 participates in a covalent cross-link: Glycyl lysine isopeptide (Lys-Gly) (interchain with G-Cter in ubiquitin).

The protein belongs to the histone H2B family. The nucleosome is a histone octamer containing two molecules each of H2A, H2B, H3 and H4 assembled in one H3-H4 heterotetramer and two H2A-H2B heterodimers. The octamer wraps approximately 147 bp of DNA. In terms of processing, monoubiquitinated by the UBC2-BRE1 complex to form H2BK123ub1. H2BK123ub1 gives a specific tag for epigenetic transcriptional activation and is also prerequisite for H3K4me and H3K79me formation. H2BK123ub1 also modulates the formation of double-strand breaks during meiosis and is a prerequisite for DNA-damage checkpoint activation. Post-translationally, phosphorylated by STE20 to form H2BS10ph during progression through meiotic prophase. May be correlated with chromosome condensation. Acetylated by GCN5 to form H2BK11ac and H2BK16ac. H2BK16ac can also be formed by ESA1. Acetylation of N-terminal lysines and particularly formation of H2BK11acK16ac has a positive effect on transcription. In terms of processing, sumoylation to form H2BK6su or H2BK7su, and probably also H2BK16su or H2BK17su, occurs preferentially near the telomeres and represses gene transcription.

It is found in the nucleus. The protein resides in the chromosome. In terms of biological role, core component of nucleosome. Nucleosomes wrap and compact DNA into chromatin, limiting DNA accessibility to the cellular machineries which require DNA as a template. Histones thereby play a central role in transcription regulation, DNA repair, DNA replication and chromosomal stability. DNA accessibility is regulated via a complex set of post-translational modifications of histones, also called histone code, and nucleosome remodeling. This is Histone H2B.1 (HTB1) from Candida glabrata (strain ATCC 2001 / BCRC 20586 / JCM 3761 / NBRC 0622 / NRRL Y-65 / CBS 138) (Yeast).